The following is a 155-amino-acid chain: Large ribosomal subunit protein uL13 (155 aa).

This sequence belongs to the universal ribosomal protein uL13 family. In terms of assembly, part of the 50S ribosomal subunit.

Functionally, this protein is one of the early assembly proteins of the 50S ribosomal subunit, although it is not seen to bind rRNA by itself. It is important during the early stages of 50S assembly. The protein is Large ribosomal subunit protein uL13 of Rickettsia rickettsii (strain Iowa).